The chain runs to 265 residues: Chlorophyll a-b binding protein 1A, chloroplastic (265 aa).

The transit peptide at 1-34 (MAAAAMALSSPSFAGQAVKLSPSASENSGNGRIT) directs the protein to the chloroplast. Residues 151–171 (LVHAQSILAIWACQVVLMGAV) traverse the membrane as a helical segment. Positions 152, 156, 164, 172, 175, and 181 each coordinate chlorophyll b. Chlorophyll a-binding residues include lysine 212, glutamate 213, asparagine 216, arginine 218, glutamine 230, histidine 245, and alanine 254. The helical transmembrane segment at 219 to 239 (LAMFSMFGFFVQAIVTGKGPL) threads the bilayer. Residue phenylalanine 261 coordinates chlorophyll b.

It belongs to the light-harvesting chlorophyll a/b-binding (LHC) protein family. The LHC complex consists of chlorophyll a-b binding proteins. Binds at least 14 chlorophylls (8 Chl-a and 6 Chl-b) and carotenoids such as lutein and neoxanthin. is required as a cofactor. Post-translationally, photoregulated by reversible phosphorylation of its threonine residues.

Its subcellular location is the plastid. It is found in the chloroplast thylakoid membrane. The light-harvesting complex (LHC) functions as a light receptor, it captures and delivers excitation energy to photosystems with which it is closely associated. The protein is Chlorophyll a-b binding protein 1A, chloroplastic (CAB1A) of Solanum lycopersicum (Tomato).